Here is a 502-residue protein sequence, read N- to C-terminus: Putative diacyglycerol O-acyltransferase MT1809 (502 aa).

Residue histidine 174 is the Proton acceptor of the active site.

Belongs to the long-chain O-acyltransferase family.

It catalyses the reaction an acyl-CoA + a 1,2-diacyl-sn-glycerol = a triacyl-sn-glycerol + CoA. Its pathway is glycerolipid metabolism; triacylglycerol biosynthesis. This is Putative diacyglycerol O-acyltransferase MT1809 from Mycobacterium tuberculosis (strain CDC 1551 / Oshkosh).